We begin with the raw amino-acid sequence, 237 residues long: Ribose-5-phosphate isomerase A (237 aa).

Substrate-binding positions include 30–33, 87–90, and 100–103; these read SGST, DGAD, and KGGG. The active-site Proton acceptor is glutamate 109. Lysine 127 serves as a coordination point for substrate.

The protein belongs to the ribose 5-phosphate isomerase family. In terms of assembly, homodimer.

It carries out the reaction aldehydo-D-ribose 5-phosphate = D-ribulose 5-phosphate. It functions in the pathway carbohydrate degradation; pentose phosphate pathway; D-ribose 5-phosphate from D-ribulose 5-phosphate (non-oxidative stage): step 1/1. Catalyzes the reversible conversion of ribose-5-phosphate to ribulose 5-phosphate. The chain is Ribose-5-phosphate isomerase A from Prochlorococcus marinus (strain SARG / CCMP1375 / SS120).